We begin with the raw amino-acid sequence, 311 residues long: Ribose-5-phosphate isomerase (311 aa).

Residues 22 to 32 (AGGAASGGGGN) show a composition bias toward gly residues. Positions 22-67 (AGGAASGGGGNSWDLPGSHVRLPGRAQSGTRGGAGNTSTSCGDSNS) are disordered. Omega-N-methylarginine is present on Arg-52. Residues 57 to 67 (NTSTSCGDSNS) show a composition bias toward polar residues. At Ser-106 the chain carries Phosphoserine.

The protein belongs to the ribose 5-phosphate isomerase family.

The enzyme catalyses aldehydo-D-ribose 5-phosphate = D-ribulose 5-phosphate. Its pathway is carbohydrate degradation; pentose phosphate pathway; D-ribose 5-phosphate from D-ribulose 5-phosphate (non-oxidative stage): step 1/1. Catalyzes the reversible conversion of ribose-5-phosphate to ribulose 5-phosphate and participates in the first step of the non-oxidative branch of the pentose phosphate pathway. This Homo sapiens (Human) protein is Ribose-5-phosphate isomerase.